A 460-amino-acid polypeptide reads, in one-letter code: Phosphoenolpyruvate carboxylase (460 aa).

This sequence belongs to the PEPCase type 2 family. As to quaternary structure, homotetramer. The cofactor is Mg(2+).

The enzyme catalyses oxaloacetate + phosphate = phosphoenolpyruvate + hydrogencarbonate. Its function is as follows. Catalyzes the irreversible beta-carboxylation of phosphoenolpyruvate (PEP) to form oxaloacetate (OAA), a four-carbon dicarboxylic acid source for the tricarboxylic acid cycle. The polypeptide is Phosphoenolpyruvate carboxylase (Pyrobaculum aerophilum (strain ATCC 51768 / DSM 7523 / JCM 9630 / CIP 104966 / NBRC 100827 / IM2)).